Consider the following 118-residue polypeptide: Urease subunit beta (118 aa).

The protein belongs to the urease beta subunit family. In terms of assembly, heterotrimer of UreA (gamma), UreB (beta) and UreC (alpha) subunits. Three heterotrimers associate to form the active enzyme.

The protein localises to the cytoplasm. It catalyses the reaction urea + 2 H2O + H(+) = hydrogencarbonate + 2 NH4(+). The protein operates within nitrogen metabolism; urea degradation; CO(2) and NH(3) from urea (urease route): step 1/1. The sequence is that of Urease subunit beta from Aliivibrio fischeri (strain ATCC 700601 / ES114) (Vibrio fischeri).